A 167-amino-acid polypeptide reads, in one-letter code: 2-C-methyl-D-erythritol 2,4-cyclodiphosphate synthase (167 aa).

A divalent metal cation contacts are provided by Asp11 and His13. 4-CDP-2-C-methyl-D-erythritol 2-phosphate is bound by residues 11 to 13 (DIH) and 37 to 38 (HS). His45 provides a ligand contact to a divalent metal cation. 4-CDP-2-C-methyl-D-erythritol 2-phosphate-binding positions include 59 to 61 (DIG), 64 to 68 (FSDTD), 103 to 109 (AQAPKMA), and Arg145.

The protein belongs to the IspF family. Homotrimer. Requires a divalent metal cation as cofactor.

The enzyme catalyses 4-CDP-2-C-methyl-D-erythritol 2-phosphate = 2-C-methyl-D-erythritol 2,4-cyclic diphosphate + CMP. The protein operates within isoprenoid biosynthesis; isopentenyl diphosphate biosynthesis via DXP pathway; isopentenyl diphosphate from 1-deoxy-D-xylulose 5-phosphate: step 4/6. Its function is as follows. Involved in the biosynthesis of isopentenyl diphosphate (IPP) and dimethylallyl diphosphate (DMAPP), two major building blocks of isoprenoid compounds. Catalyzes the conversion of 4-diphosphocytidyl-2-C-methyl-D-erythritol 2-phosphate (CDP-ME2P) to 2-C-methyl-D-erythritol 2,4-cyclodiphosphate (ME-CPP) with a corresponding release of cytidine 5-monophosphate (CMP). The sequence is that of 2-C-methyl-D-erythritol 2,4-cyclodiphosphate synthase from Nitrosomonas eutropha (strain DSM 101675 / C91 / Nm57).